Here is a 698-residue protein sequence, read N- to C-terminus: Polyribonucleotide nucleotidyltransferase (698 aa).

The Mg(2+) site is built by aspartate 485 and aspartate 491. The region spanning 552–611 (PRITTIKINPEKIRDVIGKGGAVIRALTEETGTTIELDDNGTVKIASSNGEATKEAIRRI) is the KH domain. Residues 621–689 (GRIYNGKVIR…RQGRVRLSIK (69 aa)) enclose the S1 motif domain.

This sequence belongs to the polyribonucleotide nucleotidyltransferase family. In terms of assembly, component of the RNA degradosome, which is a multiprotein complex involved in RNA processing and mRNA degradation. Requires Mg(2+) as cofactor.

The protein localises to the cytoplasm. It carries out the reaction RNA(n+1) + phosphate = RNA(n) + a ribonucleoside 5'-diphosphate. Involved in mRNA degradation. Catalyzes the phosphorolysis of single-stranded polyribonucleotides processively in the 3'- to 5'-direction. This chain is Polyribonucleotide nucleotidyltransferase, found in Shewanella frigidimarina (strain NCIMB 400).